Here is a 375-residue protein sequence, read N- to C-terminus: LIM domain-binding protein 1 (375 aa).

Disordered stretches follow at residues 248–294 and 331–375; these read PPAE…TFAL and DAAN…QASQ. Over residues 266–282 the composition is skewed to low complexity; it reads SGGSTMSSGGGNTNNSN. One can recognise an LIM interaction domain (LID) domain in the interval 300–339; it reads DVMVVGEPTLMGGEFGDEDERLITRLENTQFDAANGIDDE.

It belongs to the LDB family. As to quaternary structure, forms homodimers and heterodimers. Interacts with the LIM domain of LIM/homeobox factor lhx1/lim1, and with lhx3/lim3 and lhx5/lim5. Activates lhx1/lim1 by binding. The stoichiometry of lhx1/lim1 and ldb1 is important for their function and an excess of ldb1 can inhibit lhx1/lim1 function. When bound to lhx1/lim1, escapes degradation by rnf12. The N-terminus interacts with the N-terminal region of rnf12. Post-translationally, undergoes rnf12-mediated ubiquitin-proteasome-dependent degradation. Ubiquitously expressed in the early gastrula before localizing to the dorsal region of the vegetal hemisphere, which contains the Spemann organizer. Expressed in the CNS, pronephros and tail bud in neurula and tail-bud stage embryos. Expressed in multiple adult tissues including brain, heart, lung, stomach, intestine, liver, spleen, kidney, ovary, muscle and skin.

The protein localises to the nucleus. In terms of biological role, binds to the LIM domain of a wide variety of LIM domain-containing transcription factors. Acts as a coactivator together with otx2 to stimulate lhx1/lim1-mediated activation of the gsc promoter in the Spemann organizer. Acts synergistically with lhx1/lim1 and ssbp in axis formation. The protein is LIM domain-binding protein 1 (ldb1) of Xenopus laevis (African clawed frog).